The sequence spans 458 residues: tRNA-2-methylthio-N(6)-dimethylallyladenosine synthase (458 aa).

In terms of domain architecture, MTTase N-terminal spans 15-134 (KKVFIKTYGC…LPELLEKAKQ (120 aa)). The [4Fe-4S] cluster site is built by Cys24, Cys60, Cys97, Cys175, Cys179, and Cys182. In terms of domain architecture, Radical SAM core spans 161–395 (RKRGVSAFLT…LLLEQQNTFL (235 aa)). The 62-residue stretch at 396 to 457 (RSKIGQKTDV…SNSFVGEMTN (62 aa)) folds into the TRAM domain.

It belongs to the methylthiotransferase family. MiaB subfamily. Monomer. [4Fe-4S] cluster is required as a cofactor.

Its subcellular location is the cytoplasm. It carries out the reaction N(6)-dimethylallyladenosine(37) in tRNA + (sulfur carrier)-SH + AH2 + 2 S-adenosyl-L-methionine = 2-methylsulfanyl-N(6)-dimethylallyladenosine(37) in tRNA + (sulfur carrier)-H + 5'-deoxyadenosine + L-methionine + A + S-adenosyl-L-homocysteine + 2 H(+). Its function is as follows. Catalyzes the methylthiolation of N6-(dimethylallyl)adenosine (i(6)A), leading to the formation of 2-methylthio-N6-(dimethylallyl)adenosine (ms(2)i(6)A) at position 37 in tRNAs that read codons beginning with uridine. The polypeptide is tRNA-2-methylthio-N(6)-dimethylallyladenosine synthase (Bartonella tribocorum (strain CIP 105476 / IBS 506)).